Reading from the N-terminus, the 436-residue chain is Cholecystokinin receptor type A (436 aa).

The Extracellular segment spans residues 1–41 (MDVVDSLLMNGSNITPPCELGLENETLFCLDQPQPSKEWQS). N-linked (GlcNAc...) asparagine glycosylation is found at N10 and N24. C18 and C29 are joined by a disulfide. The helical transmembrane segment at 42–67 (AVQILLYSFIFLLSVLGNTLVITVLI) threads the bilayer. Residues 68–77 (RNKRMRTVTN) are Cytoplasmic-facing. Residues 78–104 (IFLLSLAVSDLMLCLFCMPFNLIPNLL) traverse the membrane as a helical segment. Topologically, residues 105–115 (KDFIFGSAVCK) are extracellular. C114 and C196 are disulfide-bonded. Residues 116 to 137 (TTTYFMGTSVSVSTFNLVAISL) traverse the membrane as a helical segment. Topologically, residues 138 to 157 (ERYGAICRPLQSRVWQTKSH) are cytoplasmic. Residues 158–178 (ALKVIAATWCLSFTIMTPYPI) traverse the membrane as a helical segment. Residues 179 to 210 (YSNLVPFTKNNNQTANMCRFLLPSDAMQQSWQ) are Extracellular-facing. N-linked (GlcNAc...) asparagine glycosylation occurs at N190. Residues 211–234 (TFLLLILFLIPGVVMVVAYGLISL) traverse the membrane as a helical segment. The Cytoplasmic portion of the chain corresponds to 235 to 321 (ELYQGIKFDA…NLIAKKRVIR (87 aa)). Residues 252-280 (EKRLSSGGGGGGGSSSSRYEDSDGCYLQK) form a disordered region. A helical transmembrane segment spans residues 322–342 (MLIVIVVLFFLCWMPIFSANA). At 343–357 (WRAYDTVSAEKHLSG) the chain is on the extracellular side. A helical transmembrane segment spans residues 358–381 (TPISFILLLSYTSSCVNPIIYCFM). At 382-436 (NKRFRLGFMATFPCCPNPGPTGVRGEVGEEEDGRTIRASLSRYSYSHMSTSAPPH) the chain is on the cytoplasmic side. C395 carries S-palmitoyl cysteine lipidation.

Belongs to the G-protein coupled receptor 1 family.

The protein localises to the cell membrane. Its function is as follows. Receptor for cholecystokinin. Mediates pancreatic growth and enzyme secretion, smooth muscle contraction of the gall bladder and stomach. Has a 1000-fold higher affinity for CCK rather than for gastrin. It modulates feeding and dopamine-induced behavior in the central and peripheral nervous system. This receptor mediates its action by association with G proteins that activate a phosphatidylinositol-calcium second messenger system. This chain is Cholecystokinin receptor type A (Cckar), found in Mus musculus (Mouse).